A 118-amino-acid chain; its full sequence is ATP synthase subunit g, mitochondrial (118 aa).

This sequence belongs to the ATPase g subunit family. As to quaternary structure, F-type ATPases have 2 components, CF(1) - the catalytic core - and CF(0) - the membrane proton channel.

It is found in the mitochondrion membrane. Functionally, mitochondrial membrane ATP synthase (F(1)F(0) ATP synthase or Complex V) produces ATP from ADP in the presence of a proton gradient across the membrane which is generated by electron transport complexes of the respiratory chain. F-type ATPases consist of two structural domains, F(1) - containing the extramembraneous catalytic core, and F(0) - containing the membrane proton channel, linked together by a central stalk and a peripheral stalk. During catalysis, ATP synthesis in the catalytic domain of F(1) is coupled via a rotary mechanism of the central stalk subunits to proton translocation. Part of the complex F(0) domain. Minor subunit located with subunit a in the membrane. In Schizosaccharomyces pombe (strain 972 / ATCC 24843) (Fission yeast), this protein is ATP synthase subunit g, mitochondrial (atp20).